Here is a 205-residue protein sequence, read N- to C-terminus: Ephrin-A1 (205 aa).

An N-terminal signal peptide occupies residues 1 to 18 (MEFLWAPLLGLCCSLAAA). In terms of domain architecture, Ephrin RBD spans 19–151 (DRHTVFWNSS…KLKVTVSGKI (133 aa)). A glycan (N-linked (GlcNAc...) asparagine) is linked at Asn26. Intrachain disulfides connect Cys51–Cys92 and Cys80–Cys140. Ser182 carries GPI-anchor amidated serine lipidation. Residues 183-205 (AAPRLSPLAWAVLLLPFLLLQTS) constitute a propeptide, removed in mature form.

This sequence belongs to the ephrin family. As to quaternary structure, monomer. Homodimer. Forms heterodimers with EPHA2. Binds to the receptor tyrosine kinases EPHA2, EPHA3, EPHA4, EPHA5, EPHA6 and EPHA7. Also binds with low affinity to EPHA1. Post-translationally, undergoes proteolysis by a metalloprotease to give rise to a soluble monomeric form. N-Glycosylation is required for binding to EPHA2 receptor and inducing its internalization.

The protein resides in the cell membrane. It is found in the secreted. In terms of biological role, cell surface GPI-bound ligand for Eph receptors, a family of receptor tyrosine kinases which are crucial for migration, repulsion and adhesion during neuronal, vascular and epithelial development. Binds promiscuously Eph receptors residing on adjacent cells, leading to contact-dependent bidirectional signaling into neighboring cells. Plays an important role in angiogenesis and tumor neovascularization. The recruitment of VAV2, VAV3 and PI3-kinase p85 subunit by phosphorylated EPHA2 is critical for EFNA1-induced RAC1 GTPase activation and vascular endothelial cell migration and assembly. Exerts anti-oncogenic effects in tumor cells through activation and down-regulation of EPHA2. Activates EPHA2 by inducing tyrosine phosphorylation which leads to its internalization and degradation. Acts as a negative regulator in the tumorigenesis of gliomas by down-regulating EPHA2 and FAK. Can evoke collapse of embryonic neuronal growth cone and regulates dendritic spine morphogenesis. The polypeptide is Ephrin-A1 (EFNA1) (Sus scrofa (Pig)).